We begin with the raw amino-acid sequence, 375 residues long: Probable sugar phosphate/phosphate translocator At3g17430 (375 aa).

10 helical membrane passes run 9–29 (LVLT…VILY), 43–63 (LPIT…FLLI), 76–96 (FEIY…SLWF), 106–126 (VAFI…MAVV), 140–160 (MLLV…FNIV), 163–183 (VYQV…QVLL), 193–213 (ITSL…PWYV), 229–249 (WIFF…FLVI), 257–276 (IRVA…TVIF), and 280–302 (TITG…YNYI). The disordered stretch occupies residues 328 to 348 (EKKSSDKFNPNDSVEIPRVGG).

This sequence belongs to the TPT transporter family. TPT (TC 2.A.7.9) subfamily.

The protein resides in the membrane. In Arabidopsis thaliana (Mouse-ear cress), this protein is Probable sugar phosphate/phosphate translocator At3g17430.